A 51-amino-acid chain; its full sequence is Large ribosomal subunit protein eL39 (51 aa).

The protein belongs to the eukaryotic ribosomal protein eL39 family.

This chain is Large ribosomal subunit protein eL39, found in Thermococcus onnurineus (strain NA1).